The chain runs to 82 residues: MPHIIVKIAEGRSQPLKQELADRLAATMMDVLGLDSSAVSVAVEDVPMQDWMQQVYGPDIETAGERLLKRPGYGQLASPPEE.

The active-site Proton acceptor; via imino nitrogen is the Pro2.

It belongs to the 4-oxalocrotonate tautomerase family.

The sequence is that of Probable tautomerase XF_1725 from Xylella fastidiosa (strain 9a5c).